The primary structure comprises 119 residues: Amicyanin-alpha (119 aa).

An N-terminal signal peptide occupies residues 1-20 (MRALAFAAALAAFSATAALA). In terms of domain architecture, Plastocyanin-like spans 21-119 (AGALEAVQEA…PFMKGKVVVE (99 aa)). The Cu cation site is built by histidine 67, cysteine 106, histidine 109, and methionine 112.

Cu cation serves as cofactor.

Its subcellular location is the periplasm. The protein operates within one-carbon metabolism; methylamine degradation. Primary acceptor of electrons from methylamine dehydrogenase. Passes those electrons on either a soluble cytochrome c or to pseudoazurin. This Methylorubrum extorquens (strain ATCC 14718 / DSM 1338 / JCM 2805 / NCIMB 9133 / AM1) (Methylobacterium extorquens) protein is Amicyanin-alpha (mauC).